Here is a 988-residue protein sequence, read N- to C-terminus: MPRRLILSATERGTLLALPESQDDLIRYYTFNDSDLSLIRQRRGDANRLGFAVQLCLLRYPGYALGTDSELPEPVILWVAKQVQTDPASWTKYGERDVTRREHAQELRTYLQLAPFGLSDFRALVRELTELAQQTDKGLLLAGQALESLRQKRRILPALSVIDRACSEAIARANRRVYRALVEPLTDSHRAKLDELLKLKAGSSITWLTWLRQAPLKPNSRHMLEHIERLKTFQLVDLPEVLGRHIHQNRLLKLAREGGQMTPKDLGKFEPQRRYATLAAVVLESTATVIDELVDLHDRILVKLFSGAKHKHQQQFQKQGKAINDKVRLYSKIGQALLEAKEAGSDPYAAIEAVIPWDEFTESVSEAELLARPEGFDHLHLVGENFATLRRYTPALLEVLELRAAPAAQGVLAAVQTLREMNADNLRKVPADAPTAFIKPRWKPLVITPEGLDRRFYEICALSELKNALRSGDIWVKGSRQFRDFDDYLLPAEKFAALKREQALPLAINPNSDQYLEERLQLLDEQLATVARLAKDNELPDAILTESGLKITPLDAAVPDRAQALIDQTSQLLPRIKITELLMDVDDWTGFSRHFTHLKDGAEAKDRTLLLSAILGDAINLGLTKMAESSPGLTYAKLSWLQAWHIRDETYSAALAELVNHQYQHAFAAHWGDGTTSSSDGQRFRAGGRGESTGHVNPKYGSEPGRLFYTHISDQYAPFSTRVVNVGVRDSTYVLDGLLYHESDLRIEEHYTDTAGFTDHVFALMHLLGFRFAPRIRDLGETKLYVPQGVQTYPTLRPLIGGTLNIKHVRAHWDDILRLASSIKQGTVTASLMLRKLGSYPRQNGLAVALRELGRIERTLFILDWLQSVELRRRVHAGLNKGEARNSLARAVFFNRLGEIRDRSFEQQRYRASGLNLVTAAIVLWNTVYLERATQGLVEAGKPVDGELLQFLSPLGWEHINLTGDYVWRQSRRLEDGKFRPLRMPGKP.

This sequence belongs to the transposase 7 family.

Functionally, required for transposition of transposon Tn501. In Pseudomonas aeruginosa, this protein is Transposase for transposon Tn501 (tnpA).